Consider the following 338-residue polypeptide: Anthranilate phosphoribosyltransferase (338 aa).

5-phospho-alpha-D-ribose 1-diphosphate-binding positions include Gly-81, Gly-84 to Asp-85, Thr-89, Asn-91 to Thr-94, Lys-109 to Ser-117, and Ser-121. Gly-81 is an anthranilate binding site. A Mg(2+)-binding site is contributed by Ser-93. An anthranilate-binding site is contributed by Asn-112. Residue Arg-167 participates in anthranilate binding. Mg(2+)-binding residues include Asp-226 and Glu-227.

This sequence belongs to the anthranilate phosphoribosyltransferase family. In terms of assembly, homodimer. Mg(2+) serves as cofactor.

It carries out the reaction N-(5-phospho-beta-D-ribosyl)anthranilate + diphosphate = 5-phospho-alpha-D-ribose 1-diphosphate + anthranilate. It functions in the pathway amino-acid biosynthesis; L-tryptophan biosynthesis; L-tryptophan from chorismate: step 2/5. Catalyzes the transfer of the phosphoribosyl group of 5-phosphorylribose-1-pyrophosphate (PRPP) to anthranilate to yield N-(5'-phosphoribosyl)-anthranilate (PRA). The polypeptide is Anthranilate phosphoribosyltransferase (Alkalilimnicola ehrlichii (strain ATCC BAA-1101 / DSM 17681 / MLHE-1)).